Here is a 316-residue protein sequence, read N- to C-terminus: Lipooligosaccharide heptosyltransferase 2 (316 aa).

Belongs to the glycosyltransferase 9 family.

The catalysed reaction is an L-alpha-D-Hep-(1-&gt;5)-[alpha-Kdo-(2-&gt;4)]-alpha-Kdo-(2-&gt;6)-lipid A + ADP-L-glycero-beta-D-manno-heptose = an L-alpha-D-Hep-(1-&gt;3)-L-alpha-D-Hep-(1-&gt;5)-[alpha-Kdo-(2-&gt;4)]-alpha-Kdo-(2-&gt;6)-lipid A + ADP + H(+). Its pathway is bacterial outer membrane biogenesis; LOS core biosynthesis. In terms of biological role, glycosyltransferase involved in the biosynthesis of the core oligosaccharide region of lipooligosaccharide (LOS). Catalyzes the addition of the second heptose unit to the heptosyl-Kdo2-lipid A module. The protein is Lipooligosaccharide heptosyltransferase 2 of Campylobacter jejuni subsp. jejuni serotype O:6 (strain 81116 / NCTC 11828).